Here is a 231-residue protein sequence, read N- to C-terminus: Trypsin (231 aa).

Residues 1–8 (FPTDDDDK) constitute a propeptide, activation peptide. Residues 9–229 (IVGGYTCAAN…YVNWIQQTIA (221 aa)) enclose the Peptidase S1 domain. Intrachain disulfides connect Cys-15–Cys-145, Cys-33–Cys-49, Cys-117–Cys-218, Cys-124–Cys-191, Cys-156–Cys-170, and Cys-181–Cys-205. The active-site Charge relay system is His-48. The Ca(2+) site is built by Glu-60, Asn-62, Val-65, and Glu-70. The active-site Charge relay system is Asp-92. Ser-185 acts as the Charge relay system in catalysis.

Belongs to the peptidase S1 family. Requires Ca(2+) as cofactor.

It localises to the secreted. It is found in the extracellular space. The catalysed reaction is Preferential cleavage: Arg-|-Xaa, Lys-|-Xaa.. The polypeptide is Trypsin (Sus scrofa (Pig)).